The sequence spans 249 residues: Small ribosomal subunit protein uS3 (249 aa).

Positions 39 to 107 (VRAMLKKRLY…EVHLNIVEIR (69 aa)) constitute a KH type-2 domain. The tract at residues 215-249 (LDKRLATESGPAGEGGGRERGDRPDRGDRGRRDRG) is disordered. Positions 230–249 (GGRERGDRPDRGDRGRRDRG) are enriched in basic and acidic residues.

Belongs to the universal ribosomal protein uS3 family. As to quaternary structure, part of the 30S ribosomal subunit. Forms a tight complex with proteins S10 and S14.

Functionally, binds the lower part of the 30S subunit head. Binds mRNA in the 70S ribosome, positioning it for translation. This chain is Small ribosomal subunit protein uS3, found in Caulobacter sp. (strain K31).